The chain runs to 158 residues: MSSNKILLTSSDGESFEIDEAVARKFLIIVHMMEDNCAGEAIPLENVTGDILSKIIEYAKMHVNEPSEEDEDEEAKKNLDSWDAKFMEKLDLETIFKIILAANYLNFEGLLGFASQTVADYIKDKTPEEVREIFNIENDFTPEEEEEIRKENAWTFNE.

The segment at 99-157 is interaction with the F-box domain of F-box proteins; it reads ILAANYLNFEGLLGFASQTVADYIKDKTPEEVREIFNIENDFTPEEEEEIRKENAWTFN.

The protein belongs to the SKP1 family. Part of a SCF (SKP1-cullin-F-box) protein ligase complex. Interacts with CPR1/CPR30, EBF1, SKP2A, At3g61590, At4g38940 and At5g49610. As to expression, expressed in young seedlings, roots, leaves, floral stems, inflorescences, pollen, and siliques.

The protein localises to the nucleus. Its pathway is protein modification; protein ubiquitination. Involved in ubiquitination and subsequent proteasomal degradation of target proteins. Together with CUL1, RBX1 and a F-box protein, it forms a SCF E3 ubiquitin ligase complex. The functional specificity of this complex depends on the type of F-box protein. In the SCF complex, it serves as an adapter that links the F-box protein to CUL1. This chain is SKP1-like protein 18 (ASK18), found in Arabidopsis thaliana (Mouse-ear cress).